Reading from the N-terminus, the 623-residue chain is MNALERLEKLLDKEQFEKVKAIDNPELHEFLAEWIEWLEPDKVFVCTDSPEDEGYVRWKALYYGEERMLETPNHTVHYDNYYDQARDKANTAILLPGGKKLPYINTKDRDEGLKEIRELMKGIMKGKELFVCFFVLGPKNSIFTIPAVQLTDSAYVAHSEFILYRKGYEEFKRLGRSARFFRFVHSAGELDERKTSKNLDKRRIYIDLEDETVYSVNTQYGGNTIGLKKLAFRLTIKRAVEEGWLSEHMFLMRVNGPHGRKTYFTGAYPSMCGKTSTAMIPWENIVGDDLTFILPVNGIARGANVEKGVFGIIQGVNPEDDPIIWQVLHSPVEIIFSNVLVKDGKPYWNDMGIEIPDEGENHSGKWWRGKKDAEGNEIPPSHKNARFTVSLEHFPNVDMEALENPCGVEVGGMIFGGRDADTWPPVREAFNWEHGVITMGASLESETTAATLGKEGVRAFNPMAILDFMSVHLGDYLRNYLEFGRKLKKTPKIFAVNYFLRENGVWLNHKLDKAVWLKWMELRVHGDVEAIETPIGYIPKYKDLAKLFKDVLNKEYTKEDYERQFKIRVPELLAKIDRIEEIYRKLDNVPEELFKVLEEERQRLLEAREKYGDYISPFALEGE.

Substrate-binding positions include Arg-86 and 220 to 222 (YGG). Residues Lys-229 and His-248 each contribute to the Mn(2+) site. Substrate is bound at residue Ser-270. 271–276 (MCGKTS) is a GTP binding site. The active site involves Cys-272. Asp-289 contributes to the Mn(2+) binding site. 384–386 (NAR) is a binding site for substrate. Residues Arg-386 and Arg-418 each coordinate GTP.

The protein belongs to the phosphoenolpyruvate carboxykinase [GTP] family. As to quaternary structure, homotetramer. Mn(2+) is required as a cofactor.

It is found in the cytoplasm. It carries out the reaction oxaloacetate + GTP = phosphoenolpyruvate + GDP + CO2. Its pathway is carbohydrate biosynthesis; gluconeogenesis. Involved in the gluconeogenesis. Catalyzes the conversion of oxaloacetate (OAA) to phosphoenolpyruvate (PEP), the rate-limiting step in the metabolic pathway that produces glucose from lactate and other precursors derived from the citric acid cycle. This Thermococcus kodakarensis (strain ATCC BAA-918 / JCM 12380 / KOD1) (Pyrococcus kodakaraensis (strain KOD1)) protein is Phosphoenolpyruvate carboxykinase [GTP] (pckG).